Here is a 376-residue protein sequence, read N- to C-terminus: DNA repair protein RAD51 homolog 3 (376 aa).

Positions 1-126 (MRGKTFRFEM…LMKTTEICGA (126 aa)) are required for Holliday junction resolution activity. Position 20 is a phosphoserine (S20). The interval 79 to 136 (SESHKKCTALELLEQEHTQGFIITFCSALDDILGGGVPLMKTTEICGAPGVGKTQLCM) is interaction with RAD51B, RAD51D and XRCC3. 125-132 (GAPGVGKT) contributes to the ATP binding site. Residues 366–370 (RKRSR) carry the Nuclear localization signal motif.

Belongs to the RecA family. RAD51 subfamily. As to quaternary structure, part of the RAD51 paralog protein complexes BCDX2 and CX3; the complexes have a ring-like structure arranged into a flat disc around a central channel. The BCDX2 complex consits of RAD51B, RAD51C, RAD51D and XRCC2; the CX3 complex consists of RAD51C and XRCC3. The BCDX2 subcomplex RAD51B:RAD51C interacts with RAD51. Interacts with SWSAP1; involved in homologous recombination repair. Interacts directly with PALB2 which may serve as a scaffold for a HR complex containing PALB2, BRCA2, RAD51C, RAD51 and XRCC3. Interacts with HELQ. Interacts with DNA damage up-regulated protein DDUP. Expressed in a variety of tissues, with highest expression in testis, heart muscle, spleen and prostate.

The protein localises to the nucleus. It localises to the cytoplasm. The protein resides in the perinuclear region. Its subcellular location is the mitochondrion. In terms of biological role, essential for the homologous recombination (HR) pathway of DNA repair. Involved in the homologous recombination repair (HRR) pathway of double-stranded DNA breaks arising during DNA replication or induced by DNA-damaging agents. Part of the RAD51 paralog protein complexes BCDX2 and CX3 which act at different stages of the BRCA1-BRCA2-dependent HR pathway. Upon DNA damage, BCDX2 seems to act downstream of BRCA2 recruitment and upstream of RAD51 recruitment; CX3 seems to act downstream of RAD51 recruitment; both complexes bind predominantly to the intersection of the four duplex arms of the Holliday junction (HJ) and to junction of replication forks. The BCDX2 complex was originally reported to bind single-stranded DNA, single-stranded gaps in duplex DNA and specifically to nicks in duplex DNA. The BCDX2 subcomplex RAD51B:RAD51C exhibits single-stranded DNA-dependent ATPase activity suggesting an involvement in early stages of the HR pathway. Involved in RAD51 foci formation in response to DNA damage suggesting an involvement in early stages of HR probably in the invasion step. Has an early function in DNA repair in facilitating phosphorylation of the checkpoint kinase CHEK2 and thereby transduction of the damage signal, leading to cell cycle arrest and HR activation. Participates in branch migration and HJ resolution and thus is important for processing HR intermediates late in the DNA repair process; the function may be linked to the CX3 complex. Part of a PALB2-scaffolded HR complex containing BRCA2 and which is thought to play a role in DNA repair by HR. Protects RAD51 from ubiquitin-mediated degradation that is enhanced following DNA damage. Plays a role in regulating mitochondrial DNA copy number under conditions of oxidative stress in the presence of RAD51 and XRCC3. Contributes to DNA cross-link resistance, sister chromatid cohesion and genomic stability. Involved in maintaining centrosome number in mitosis. This Homo sapiens (Human) protein is DNA repair protein RAD51 homolog 3 (RAD51C).